A 253-amino-acid chain; its full sequence is Protein C1orf43 homolog (253 aa).

A helical membrane pass occupies residues 11-31; that stretch reads VNVVLVMAYGSLVFVLLFIFV.

It is found in the membrane. Its subcellular location is the golgi apparatus. It localises to the mitochondrion. Functionally, general regulator of phagocytosis. Required to uptake Gram negative bacterium by macrophages. This Mus musculus (Mouse) protein is Protein C1orf43 homolog.